A 121-amino-acid chain; its full sequence is Phosphoribosyl-ATP pyrophosphatase (121 aa).

It belongs to the PRA-PH family.

The protein localises to the cytoplasm. It carries out the reaction 1-(5-phospho-beta-D-ribosyl)-ATP + H2O = 1-(5-phospho-beta-D-ribosyl)-5'-AMP + diphosphate + H(+). It participates in amino-acid biosynthesis; L-histidine biosynthesis; L-histidine from 5-phospho-alpha-D-ribose 1-diphosphate: step 2/9. In Burkholderia vietnamiensis (strain G4 / LMG 22486) (Burkholderia cepacia (strain R1808)), this protein is Phosphoribosyl-ATP pyrophosphatase.